The chain runs to 1021 residues: Ribosome quality control complex subunit 2 (1021 aa).

Residues 348-388 adopt a coiled-coil conformation; that stretch reads IEAQKLKKRAHDRLATAERRLESAKEDQARKLQSLQDAQAT. Positions 457–484 are disordered; that stretch reads NPESVDNSDESSETSDDDLDDSDDDNKV. A compositionally biased stretch (acidic residues) spans 462-480; that stretch reads DNSDESSETSDDDLDDSDD. Ser-478 carries the post-translational modification Phosphoserine. 2 coiled-coil regions span residues 507–546 and 698–727; these read NARKQYELRREALIKETKTAEAASKALKSTQRKIEQDLKR and DEKSSERRKARRLEMEVVETQGKVSELKME. Polar residues-rich tracts occupy residues 746 to 761 and 839 to 856; these read YNEDTNNQSTPDTTGS and ISSQIPSNDSSNVQTPTA. Disordered stretches follow at residues 746-801 and 832-905; these read YNED…TALE and HAAR…VESF. Basic and acidic residues predominate over residues 876-905; that stretch reads DQSRNSEAENEKGLSTEQRDEKKHAKVESF.

It belongs to the NEMF family. In terms of assembly, component of the ribosome quality control complex (RQC), composed of the E3 ubiquitin ligase rkr1/ltn1, rqc1 and mtr1/rqc2, as well as cdc48 and its ubiquitin-binding cofactors associated with the 60S ribosomal subunit. RQC2 binds to the 40S-binding surface of tRNAs.

It localises to the cytoplasm. In terms of biological role, key component of the ribosome quality control complex (RQC), a ribosome-associated complex that mediates the extraction of incompletely synthesized nascent chains from stalled ribosomes as well as their ubiquitin-mediated proteasomal degradation. Thereby, frees 60S subunit ribosomes from the stalled translation complex and prevents the accumulation of nascent polypeptide chains that are potentially toxic for the cell. Within the RQC complex, mtr1/rqc2 specifically binds stalled 60S ribosomal subunits by recognizing an exposed, nascent chain-conjugated tRNA moiety and promotes the recruitment of rkr1/ltn1 to stalled 60S subunits. Following binding to stalled 60S ribosomal subunits, mtr1/rqc2 mediates CAT tailing by recruiting alanine- and threonine-charged tRNA to the A-site and directing the elongation of stalled nascent chains independently of mRNA or 40S subunits, leading to non-templated C-terminal Ala and Thr extensions (CAT tails). CAT tails promote the rkr1/ltn1-mediated ubiquitination of incompletely synthesized nascent polypeptides: CAT tailing facilitates rkr1/ltn1-dependent ubiquitination by exposing lysine residues that would otherwise remain buried in the ribosomal exit tunnel. Following ubiquitination, incompletely synthesized nascent polypeptides are recognized by CDC48 and degraded by the proteasome. CAT-tailed proteins tend to aggregate and sequester chaperones and can induce proteotoxic stress; their rkr1/ltn1-dependent ubiquitination and degradation is required to prevent proteotoxic stress. This is Ribosome quality control complex subunit 2 from Schizosaccharomyces pombe (strain 972 / ATCC 24843) (Fission yeast).